A 493-amino-acid chain; its full sequence is Cobyric acid synthase (493 aa).

The 195-residue stretch at 261–455 (HTRIAVVAYP…LHGLFEDAAV (195 aa)) folds into the GATase cobBQ-type domain. The active-site Nucleophile is the Cys-342. His-447 is an active-site residue.

It belongs to the CobB/CobQ family. CobQ subfamily.

It participates in cofactor biosynthesis; adenosylcobalamin biosynthesis. In terms of biological role, catalyzes amidations at positions B, D, E, and G on adenosylcobyrinic A,C-diamide. NH(2) groups are provided by glutamine, and one molecule of ATP is hydrogenolyzed for each amidation. The polypeptide is Cobyric acid synthase (Acidovorax sp. (strain JS42)).